We begin with the raw amino-acid sequence, 346 residues long: 3-isopropylmalate dehydrogenase (346 aa).

76–87 contributes to the NAD(+) binding site; it reads GPQWTDPNNRPE. Substrate is bound by residues arginine 94, arginine 104, arginine 132, and aspartate 217. Residues aspartate 217, aspartate 241, and aspartate 245 each contribute to the Mg(2+) site. 275–287 serves as a coordination point for NAD(+); the sequence is GSAPDIANQNLAN.

Belongs to the isocitrate and isopropylmalate dehydrogenases family. LeuB type 1 subfamily. As to quaternary structure, homodimer. Mg(2+) serves as cofactor. Requires Mn(2+) as cofactor.

The protein localises to the cytoplasm. It catalyses the reaction (2R,3S)-3-isopropylmalate + NAD(+) = 4-methyl-2-oxopentanoate + CO2 + NADH. It participates in amino-acid biosynthesis; L-leucine biosynthesis; L-leucine from 3-methyl-2-oxobutanoate: step 3/4. Its function is as follows. Catalyzes the oxidation of 3-carboxy-2-hydroxy-4-methylpentanoate (3-isopropylmalate) to 3-carboxy-4-methyl-2-oxopentanoate. The product decarboxylates to 4-methyl-2 oxopentanoate. This chain is 3-isopropylmalate dehydrogenase, found in Staphylococcus haemolyticus (strain JCSC1435).